The primary structure comprises 675 residues: Methionine--tRNA ligase (675 aa).

Positions 15–25 (PYANGSIHLGH) match the 'HIGH' region motif. Zn(2+) contacts are provided by Cys146, Cys149, Cys159, and Cys162. Residues 332–336 (KMSKS) carry the 'KMSKS' region motif. Lys335 serves as a coordination point for ATP. A tRNA-binding domain is found at 573-675 (DFAKVDMRIA…SGAQPGMQVK (103 aa)).

The protein belongs to the class-I aminoacyl-tRNA synthetase family. MetG type 1 subfamily. In terms of assembly, homodimer. The cofactor is Zn(2+).

Its subcellular location is the cytoplasm. The catalysed reaction is tRNA(Met) + L-methionine + ATP = L-methionyl-tRNA(Met) + AMP + diphosphate. Functionally, is required not only for elongation of protein synthesis but also for the initiation of all mRNA translation through initiator tRNA(fMet) aminoacylation. This is Methionine--tRNA ligase from Yersinia pestis bv. Antiqua (strain Angola).